Consider the following 89-residue polypeptide: Small ribosomal subunit protein uS15 (89 aa).

This sequence belongs to the universal ribosomal protein uS15 family. Part of the 30S ribosomal subunit. Forms a bridge to the 50S subunit in the 70S ribosome, contacting the 23S rRNA.

Functionally, one of the primary rRNA binding proteins, it binds directly to 16S rRNA where it helps nucleate assembly of the platform of the 30S subunit by binding and bridging several RNA helices of the 16S rRNA. Forms an intersubunit bridge (bridge B4) with the 23S rRNA of the 50S subunit in the ribosome. This is Small ribosomal subunit protein uS15 from Arthrobacter sp. (strain FB24).